The primary structure comprises 304 residues: Mycothiol acetyltransferase (304 aa).

E36 contacts 1D-myo-inositol 2-(L-cysteinylamino)-2-deoxy-alpha-D-glucopyranoside. 73 to 75 (LFV) provides a ligand contact to acetyl-CoA. The N-acetyltransferase domain maps to 145 to 304 (LEIQTYTESV…EEHCVWAKSD (160 aa)). 1D-myo-inositol 2-(L-cysteinylamino)-2-deoxy-alpha-D-glucopyranoside-binding residues include E179, K225, and E236. An acetyl-CoA-binding site is contributed by 240 to 242 (VGL). Y274 contributes to the 1D-myo-inositol 2-(L-cysteinylamino)-2-deoxy-alpha-D-glucopyranoside binding site. Residue 279-284 (NDPAVK) coordinates acetyl-CoA.

It belongs to the acetyltransferase family. MshD subfamily. In terms of assembly, monomer.

The enzyme catalyses 1D-myo-inositol 2-(L-cysteinylamino)-2-deoxy-alpha-D-glucopyranoside + acetyl-CoA = mycothiol + CoA + H(+). Functionally, catalyzes the transfer of acetyl from acetyl-CoA to desacetylmycothiol (Cys-GlcN-Ins) to form mycothiol. In Corynebacterium aurimucosum (strain ATCC 700975 / DSM 44827 / CIP 107346 / CN-1) (Corynebacterium nigricans), this protein is Mycothiol acetyltransferase.